The chain runs to 276 residues: N-alpha-acetyltransferase 60 (276 aa).

One can recognise an N-acetyltransferase domain in the interval 34–239; sequence VQLRFLVPDD…WTLLDHIKHY (206 aa). Substrate is bound at residue Tyr-59. Tyr-139 is an active-site residue. A substrate-binding site is contributed by Leu-141. Acetyl-CoA is bound by residues 143-145 and 151-156; these read LGV and RNGIGS. His-180 is an active-site residue. Acetyl-CoA contacts are provided by residues Asn-185 and 192–195; that span reads YEKR. The segment at 204 to 215 is required for homodimerization; sequence PYYYNIRGKGKD. Tyr-207 lines the substrate pocket.

The protein belongs to the acetyltransferase family. NAA60 subfamily.

The enzyme catalyses N-terminal L-methionyl-[transmembrane protein] + acetyl-CoA = N-terminal N(alpha)-acetyl-L-methionyl-[transmembrane protein] + CoA + H(+). It carries out the reaction L-lysyl-[protein] + acetyl-CoA = N(6)-acetyl-L-lysyl-[protein] + CoA + H(+). Displays alpha (N-terminal) acetyltransferase activity towards a range of N-terminal sequences including those starting with Met-Lys, Met-Val, Met-Ala and Met-Met. Required for normal chromosomal segregation during anaphase. Functionally, shows histone acetyltransferase activity toward free histones. In terms of biological role, does not show histone acetyltransferase activity toward free histones. This is N-alpha-acetyltransferase 60 from Drosophila melanogaster (Fruit fly).